Here is a 319-residue protein sequence, read N- to C-terminus: Beta-ketoacyl-[acyl-carrier-protein] synthase III (319 aa).

Residues cysteine 113 and histidine 246 contribute to the active site. Positions 247-251 (QANLR) are ACP-binding. The active site involves asparagine 276.

The protein belongs to the thiolase-like superfamily. FabH family. As to quaternary structure, homodimer.

It is found in the cytoplasm. The enzyme catalyses malonyl-[ACP] + acetyl-CoA + H(+) = 3-oxobutanoyl-[ACP] + CO2 + CoA. The protein operates within lipid metabolism; fatty acid biosynthesis. Its function is as follows. Catalyzes the condensation reaction of fatty acid synthesis by the addition to an acyl acceptor of two carbons from malonyl-ACP. Catalyzes the first condensation reaction which initiates fatty acid synthesis and may therefore play a role in governing the total rate of fatty acid production. Possesses both acetoacetyl-ACP synthase and acetyl transacylase activities. Its substrate specificity determines the biosynthesis of branched-chain and/or straight-chain of fatty acids. The chain is Beta-ketoacyl-[acyl-carrier-protein] synthase III from Laribacter hongkongensis (strain HLHK9).